The sequence spans 111 residues: Protein IDA-LIKE 5 (111 aa).

A signal peptide spans 1-27; it reads MGNKRIKAMMILVVMIMMVFSWRICEA. Over residues 46 to 56 the composition is skewed to basic residues; that stretch reads RRPNPRNHHHQ. A disordered region spans residues 46–65; sequence RRPNPRNHHHQNQGFNGDDY.

As to expression, expressed mainly in flowers. Lower levels in buds and seedlings. Detected in vascular tissues and in hydathodes.

The protein resides in the secreted. It is found in the extracellular space. May be involved in floral abscission. In Arabidopsis thaliana (Mouse-ear cress), this protein is Protein IDA-LIKE 5 (IDL5).